Reading from the N-terminus, the 819-residue chain is MEAFLKEFGDYYGYPDGPKNIQEIRDTEFKRLDKGVVYLDHAGSTLYSELQMEYIFKDFTSNVFGNPHSQSDISSATSDLIADARHQVLEYFNASPEDYSCLFTSGATAALKLVGETFPWTQDSNFLYTMENHNSVLGIREYALAQGASACAVDIEEAANQPGQLTNSGPSIKVKHRAVQMRNTSKLQKEESRGNAYNLFAFPSECNFSGLRFNLDLVKLMKENTETVLQGSPFSKSKRWMVLIDAAKGCATLPPDLSEYPADFVVLSFYKLFGYPTGLGALLVRNDAAKLLKKTYFSGGTVAASIADIDFVKRRERVEEFFEDGSASFLSIAAIRHGFKLLKSLTPSAIWMHTTSLSIYVKKKLQALRHGNGAAVCVLYGSENLELSSHKSGPTVTFNLKRPDGSWFGYLEVEKLASLSGIQLRTGCFCNPGACAKYLELSHSELRSNVEAGHICWDDNDVINGKPTGAVRVSFGYMSTFEDAKKFIDFIISSFASPPKKTGNGTVVSGRFPQLPSEDLESKESFPSHYLKSITVYPIKSCAGFSVIRWPLCRTGLLHDREWMVQGLTGEILTQKKVPEMSLIKTFIDLEEGLLSVESSRCEDKLHIRIKSDSYNPRNDEFDSHANILENRNEETRINRWFTNAIGRQCKLLRYSSSTSKDCLNRNKSPGLCRDLESNINFANEAQFLLISEESVADLNRRLEAKDEDYKRAHEKLNPHRFRPNLVISGGEPYGEDKWKTVKIGDNHFTSLGGCNRCQMINISNEAGLVKKSNEPLTTLASYRRVKGKILFGTLLRYEIDEKRQCWIGVGEEVNPDIE.

The residue at position 271 (lysine 271) is an N6-(pyridoxal phosphate)lysine. The active site involves cysteine 430. Residues 650–817 (CKLLRYSSST…IGVGEEVNPD (168 aa)) form the MOSC domain.

This sequence belongs to the class-V pyridoxal-phosphate-dependent aminotransferase family. MOCOS subfamily. Pyridoxal 5'-phosphate is required as a cofactor. In terms of tissue distribution, ubiquitously expressed.

It carries out the reaction Mo-molybdopterin + L-cysteine + AH2 = thio-Mo-molybdopterin + L-alanine + A + H2O. It participates in cofactor biosynthesis; molybdopterin biosynthesis. In terms of biological role, sulfurates the molybdenum cofactor. Sulfation of molybdenum is essential for xanthine dehydrogenase (XDH) and aldehyde oxidase (ADO) enzymes in which molybdenum cofactor is liganded by 1 oxygen and 1 sulfur atom in active form. Modulates cold stress- and osmotic stress-responsive gene expression by acting as key regulator of abscisic acid (ABA) biosynthesis. This Arabidopsis thaliana (Mouse-ear cress) protein is Molybdenum cofactor sulfurase (ABA3).